The chain runs to 239 residues: Orotidine 5'-phosphate decarboxylase (239 aa).

Residues D15, K37, 64–73 (DLKFHDIPNT), T126, R187, Q196, G216, and R217 each bind substrate. The Proton donor role is filled by K66.

Belongs to the OMP decarboxylase family. Type 1 subfamily. Homodimer.

The catalysed reaction is orotidine 5'-phosphate + H(+) = UMP + CO2. The protein operates within pyrimidine metabolism; UMP biosynthesis via de novo pathway; UMP from orotate: step 2/2. Its function is as follows. Catalyzes the decarboxylation of orotidine 5'-monophosphate (OMP) to uridine 5'-monophosphate (UMP). The polypeptide is Orotidine 5'-phosphate decarboxylase (Geobacter metallireducens (strain ATCC 53774 / DSM 7210 / GS-15)).